A 910-amino-acid polypeptide reads, in one-letter code: Harmonin (910 aa).

The interval 1–86 (MDRKVAREFR…LTPRRSRKLK (86 aa)) is N-terminal domain. 2 PDZ domains span residues 87–171 (EVRL…GLIP) and 211–295 (KVFI…AGRE). Positions 194 to 833 (GVRGGLGSPG…KAWNQGGDWI (640 aa)) are mediates interaction with MYO7B. Serine 219 carries the phosphoserine modification. 2 coiled-coil regions span residues 299–377 (TDRE…WEED) and 417–482 (TIRK…DLEE). The interval 563 to 688 (VMPHPPSVNS…PPRGPGVSTI (126 aa)) is disordered. The segment covering 564 to 582 (MPHPPSVNSPSKVPAPPVL) has biased composition (pro residues). A compositionally biased stretch (low complexity) spans 583–596 (PSSGHVSSSSSPWV). Positions 599–611 (TPPPIPIPPPPSI) are enriched in pro residues. Residues 650-664 (NTHSGKPSSSPTTER) are compositionally biased toward polar residues. The PDZ 3 domain occupies 752–839 (DVRLLRIKKE…GDWIDLVVAV (88 aa)). Positions 890 to 910 (KSRERNQTDPSWRPASSAPSP) are disordered. Positions 899–910 (PSWRPASSAPSP) are enriched in low complexity.

In terms of assembly, part of the IMAC/intermicrovillar adhesion complex/intermicrovillar tip-link complex composed of ANKS4B, MYO7B, USH1C, CDHR2 and CDHR5. Part of a complex composed of USH1C, USH1G and MYO7A. Interacts with F-actin. Interacts with USH2A. Interacts with SLC4A7. Interacts (via PDZ1 domain) with the C-terminus of USHBP1. Interacts (via N-terminus and PDZ 2 domain) with CDH23. Interacts with USH1G. Interacts with MYO7B. Interacts with CDHR2 and CDHR5; may mediate their interaction with MYO7B at the microvilli tip. Interacts (via PDZ 1 domain) with ANKS4B. Interacts (via PDZ 1 domain) with DOCK4. As to expression, detected in stereocilia of cochlear hair cells (at protein level). Isoform 1 is expressed in the eye, cochlea, vestibule, heart, kidney, small intestine and testis; it is barely visible in skeletal muscle, liver, and lung and is absent from the brain. Isoforms 2 and 3 are expressed in the cochlea and vestibule.

The protein localises to the cytoplasm. Its subcellular location is the cytosol. It localises to the cytoskeleton. It is found in the cell projection. The protein resides in the microvillus. In terms of biological role, anchoring/scaffolding protein that is a part of the functional network formed by USH1C, USH1G, CDH23 and MYO7A that mediates mechanotransduction in cochlear hair cells. Required for normal development and maintenance of cochlear hair cell bundles. As part of the intermicrovillar adhesion complex/IMAC plays a role in brush border differentiation, controlling microvilli organization and length. Probably plays a central regulatory role in the assembly of the complex, recruiting CDHR2, CDHR5 and MYO7B to the microvilli tips. In Mus musculus (Mouse), this protein is Harmonin (Ush1c).